Consider the following 2542-residue polypeptide: Probable polyketide synthase 41 (2542 aa).

One can recognise a Ketosynthase family 3 (KS3) domain in the interval 11 to 441 (CNKVAIIGIG…GSNCCLIVSS (431 aa)). Residues Cys177, His318, and His360 each act as for beta-ketoacyl synthase activity in the active site. The tract at residues 628–661 (GIKPSIIVGHSLGEISSSYCSGMIDLDTFCYLIY) is acyl/malonyl transferase. Ser638 (for acyl/malonyl transferase activity) is an active-site residue. The segment at 926 to 1059 (INHLGISNSN…ANFQLFSRGP (134 aa)) is N-terminal hotdog fold. A PKS/mFAS DH domain is found at 926–1231 (INHLGISNSN…FKSTTKIKDP (306 aa)). His959 acts as the Proton acceptor; for dehydratase activity in catalysis. The segment at 1083-1231 (NLTKLSKQEL…FKSTTKIKDP (149 aa)) is C-terminal hotdog fold. The active-site Proton donor; for dehydratase activity is the Asp1145. Residues 2459–2537 (NVELTVDQLI…SFIQLVKNSM (79 aa)) enclose the Carrier domain. Ser2496 bears the O-(pantetheine 4'-phosphoryl)serine mark.

It depends on pantetheine 4'-phosphate as a cofactor.

Probable polyketide synthase. This Dictyostelium discoideum (Social amoeba) protein is Probable polyketide synthase 41 (pks41).